The primary structure comprises 690 residues: Xylosyl- and glucuronyltransferase LARGE2 (690 aa).

At Met-1–Pro-7 the chain is on the cytoplasmic side. The chain crosses the membrane as a helical; Signal-anchor for type II membrane protein span at residues Arg-8–Gly-28. Residues Arg-29–Ala-690 lie on the Lumenal side of the membrane. Residues Asn-50 and Asn-77 are each glycosylated (N-linked (GlcNAc...) asparagine). The xylosyltransferase activity stretch occupies residues Leu-67–Cys-342. Positions 171 and 173 each coordinate Mn(2+). An N-linked (GlcNAc...) asparagine glycan is attached at Asn-201. The glucuronyltransferase activity stretch occupies residues Arg-343 to Ser-686. Mn(2+)-binding residues include Asp-491 and Asp-493.

It in the C-terminal section; belongs to the glycosyltransferase 49 family. This sequence in the N-terminal section; belongs to the glycosyltransferase 8 family. In terms of assembly, interacts with B4GAT1. Mn(2+) is required as a cofactor.

The protein localises to the golgi apparatus membrane. It catalyses the reaction 3-O-[beta-D-GlcA-(1-&gt;3)-beta-D-Xyl-(1-&gt;4)-Rib-ol-P-Rib-ol-P-3-beta-D-GalNAc-(1-&gt;3)-beta-D-GlcNAc-(1-&gt;4)-(O-6-P-alpha-D-Man)]-Thr-[protein] + UDP-alpha-D-xylose = 3-O-[alpha-D-Xyl-(1-&gt;3)-beta-D-GlcA-(1-&gt;4)-beta-D-Xyl-(1-&gt;4)-Rib-ol-P-Rib-ol-P-3-beta-D-GalNAc-(1-&gt;3)-beta-D-GlcNAc-(1-&gt;4)-(O-6-P-alpha-D-Man)]-Thr-[protein] + UDP + H(+). The enzyme catalyses 3-O-{(1-&gt;[3)-alpha-D-Xyl-(1-&gt;3)-beta-D-GlcA-(1-&gt;](n)-4)-beta-D-Xyl-(1-&gt;4)-Rib-ol-P-Rib-ol-P-3-beta-D-GalNAc-(1-&gt;3)-beta-D-GlcNAc-(1-&gt;4)-O-6-P-alpha-D-Man}-L-Thr-[protein] + UDP-alpha-D-glucuronate = 3-O-{beta-D-GlcA-(1-&gt;[3)-alpha-D-Xyl-(1-&gt;3)-beta-D-GlcA-(1-&gt;](n)-4)-beta-D-Xyl-(1-&gt;4)-Rib-ol-P-Rib-ol-P-3-beta-D-GalNAc-(1-&gt;3)-beta-D-GlcNAc-(1-&gt;4)-O-6-P-alpha-D-Man}-L-Thr-[protein] + UDP + H(+). The catalysed reaction is 3-O-{beta-D-GlcA-(1-&gt;[3)-alpha-D-Xyl-(1-&gt;3)-beta-D-GlcA-(1-&gt;](n)-4)-beta-D-Xyl-(1-&gt;4)-Rib-ol-P-Rib-ol-P-3-beta-D-GalNAc-(1-&gt;3)-beta-D-GlcNAc-(1-&gt;4)-O-6-P-alpha-D-Man}-L-Thr-[protein] + UDP-alpha-D-xylose = 3-O-{(1-&gt;[3)-alpha-D-Xyl-(1-&gt;3)-beta-D-GlcA-(1-&gt;](n+1)-4)-beta-D-Xyl-(1-&gt;4)-Rib-ol-P-Rib-ol-P-3-beta-D-GalNAc-(1-&gt;3)-beta-D-GlcNAc-(1-&gt;4)-O-6-P-alpha-D-Man}-L-Thr-[protein] + UDP + H(+). It participates in protein modification; protein glycosylation. In terms of biological role, bifunctional glycosyltransferase with both alpha-1,3-xylosyltransferase and beta-1,3-glucuronyltransferase activities involved in the maturation of alpha-dystroglycan (DAG1) by glycosylation leading to DAG1 binding to laminin G-like domain-containing extracellular proteins with high affinity and in a phosphorylated-O-mannosyl trisaccharide dependent manner. Elongates the glucuronyl-beta-1,4-xylose-beta disaccharide primer structure by adding repeating units [-3-Xylose-alpha-1,3-GlcA-beta-1-] to produce a heteropolysaccharide. Supports the maturation of DAG1 more effectively than LARGE1. In addition, can modify both heparan sulfate (HS)- and chondroitin/dermatan sulfate (CS/DS)-proteoglycans (PGs), namely GPC4, with a glycosaminoglycan (GAG)-like polysaccharide composed of xylose and glucuronic acid to confer laminin binding. This is Xylosyl- and glucuronyltransferase LARGE2 from Rattus norvegicus (Rat).